The following is a 194-amino-acid chain: Peptidyl-tRNA hydrolase (194 aa).

Tyr-16 is a tRNA binding site. His-21 acts as the Proton acceptor in catalysis. TRNA-binding residues include Phe-67, Asn-69, and Asn-115.

Belongs to the PTH family. As to quaternary structure, monomer.

It is found in the cytoplasm. The catalysed reaction is an N-acyl-L-alpha-aminoacyl-tRNA + H2O = an N-acyl-L-amino acid + a tRNA + H(+). Functionally, hydrolyzes ribosome-free peptidyl-tRNAs (with 1 or more amino acids incorporated), which drop off the ribosome during protein synthesis, or as a result of ribosome stalling. Its function is as follows. Catalyzes the release of premature peptidyl moieties from peptidyl-tRNA molecules trapped in stalled 50S ribosomal subunits, and thus maintains levels of free tRNAs and 50S ribosomes. The protein is Peptidyl-tRNA hydrolase of Salmonella paratyphi B (strain ATCC BAA-1250 / SPB7).